The following is a 94-amino-acid chain: Co-chaperonin GroES (94 aa).

The protein belongs to the GroES chaperonin family. Heptamer of 7 subunits arranged in a ring. Interacts with the chaperonin GroEL.

Its subcellular location is the cytoplasm. Functionally, together with the chaperonin GroEL, plays an essential role in assisting protein folding. The GroEL-GroES system forms a nano-cage that allows encapsulation of the non-native substrate proteins and provides a physical environment optimized to promote and accelerate protein folding. GroES binds to the apical surface of the GroEL ring, thereby capping the opening of the GroEL channel. This chain is Co-chaperonin GroES, found in Brevibacillus brevis (strain 47 / JCM 6285 / NBRC 100599).